We begin with the raw amino-acid sequence, 346 residues long: Probable alcohol dehydrogenase AdhA (346 aa).

Cysteine 51, histidine 73, cysteine 109, cysteine 112, cysteine 115, cysteine 123, and cysteine 165 together coordinate Zn(2+).

This sequence belongs to the zinc-containing alcohol dehydrogenase family. Zn(2+) is required as a cofactor.

The enzyme catalyses a primary alcohol + NAD(+) = an aldehyde + NADH + H(+). It carries out the reaction a secondary alcohol + NAD(+) = a ketone + NADH + H(+). This chain is Probable alcohol dehydrogenase AdhA (adhA), found in Mycobacterium tuberculosis (strain CDC 1551 / Oshkosh).